The following is a 505-amino-acid chain: Membrane-bound O-acyltransferase GUP1 (505 aa).

The Extracellular segment spans residues 1–217; that stretch reads MFKAAMDASN…VAPIPLTDYN (217 aa). Residues 218–238 form a helical membrane-spanning segment; it reads FVNYMAYITYAPLFIAGPIIT. At 239 to 266 the chain is on the cytoplasmic side; sequence FNDYIYQSDYKAMSSVKDYKRTFIYFLR. The helical transmembrane segment at 267-287 threads the bilayer; that stretch reads FAFCILVMEFLLHFMYVVAVS. Residues 288-296 lie on the Extracellular side of the membrane; that stretch reads KTKAWEGDT. The chain crosses the membrane as a helical span at residues 297–317; it reads PFQLSMLGLFNLNIIWLKLLI. Residues 318–377 lie on the Cytoplasmic side of the membrane; the sequence is PWRLFRLWSLIDGIDPPENMIRCMDNNFSTLAFWRAWHRSYNRWIIRYIYIPLGGGGKYR. 2 helical membrane-spanning segments follow: residues 378 to 398 and 399 to 419; these read ILNS…ELKL and LMWG…TAIF. The active site involves H392. The Cytoplasmic portion of the chain corresponds to 420–430; the sequence is KNYQHEPWYRH. The chain crosses the membrane as a helical span at residues 431–451; it reads VCALGAVINIWMMMLANLFGF. Topologically, residues 452–464 are extracellular; the sequence is CMGKDGTMSLIKT. A helical transmembrane segment spans residues 465-485; it reads LFTTAVGLRFLFLSLGALFVG. At 486-505 the chain is on the cytoplasmic side; that stretch reads SQVMFELREAEKRRGVNVKC.

This sequence belongs to the membrane-bound acyltransferase family.

It localises to the cell membrane. The protein resides in the endoplasmic reticulum membrane. The protein localises to the mitochondrion membrane. In terms of biological role, membrane-bound O-acyltransferase involved in the remodeling of glycosylphosphatidylinositol (GPI) anchors. Acts only on GPI-anchored proteins, but not on free GPI lipids. Also involved in lipid metabolism, having profound effects on sphingolipid-sterol-ordered domains integrity and assembly. Involved in cell integrity and apoptosis. The sequence is that of Membrane-bound O-acyltransferase GUP1 (GUP1) from Millerozyma farinosa (Yeast).